Here is a 73-residue protein sequence, read N- to C-terminus: Putative antitoxin VapB9 (73 aa).

Its function is as follows. Antitoxin component of a possible type II toxin-antitoxin (TA) system. The cognate toxin is VapC9. This is Putative antitoxin VapB9 (vapB9) from Mycobacterium tuberculosis (strain CDC 1551 / Oshkosh).